Here is a 326-residue protein sequence, read N- to C-terminus: GMP reductase (326 aa).

Catalysis depends on Cys175, which acts as the Thioimidate intermediate. Ile204–Val227 contributes to the NADP(+) binding site.

Belongs to the IMPDH/GMPR family. GuaC type 2 subfamily.

It carries out the reaction IMP + NH4(+) + NADP(+) = GMP + NADPH + 2 H(+). Catalyzes the irreversible NADPH-dependent deamination of GMP to IMP. It functions in the conversion of nucleobase, nucleoside and nucleotide derivatives of G to A nucleotides, and in maintaining the intracellular balance of A and G nucleotides. The polypeptide is GMP reductase (Bacillus licheniformis (strain ATCC 14580 / DSM 13 / JCM 2505 / CCUG 7422 / NBRC 12200 / NCIMB 9375 / NCTC 10341 / NRRL NRS-1264 / Gibson 46)).